Reading from the N-terminus, the 333-residue chain is DNA-directed RNA polymerase subunit alpha (333 aa).

Residues 1 to 234 (MQISVNEFLT…QQLAAFVDLK (234 aa)) are alpha N-terminal domain (alpha-NTD). The tract at residues 248-333 (IDPILLRPVD…SLKKDDKATA (86 aa)) is alpha C-terminal domain (alpha-CTD).

Belongs to the RNA polymerase alpha chain family. In terms of assembly, homodimer. The RNAP catalytic core consists of 2 alpha, 1 beta, 1 beta' and 1 omega subunit. When a sigma factor is associated with the core the holoenzyme is formed, which can initiate transcription.

The enzyme catalyses RNA(n) + a ribonucleoside 5'-triphosphate = RNA(n+1) + diphosphate. Functionally, DNA-dependent RNA polymerase catalyzes the transcription of DNA into RNA using the four ribonucleoside triphosphates as substrates. The protein is DNA-directed RNA polymerase subunit alpha of Ectopseudomonas mendocina (strain ymp) (Pseudomonas mendocina).